Here is a 560-residue protein sequence, read N- to C-terminus: MASSTALICDTEAWKDLKGHVEDIKKTHLRDLMSDANRCQSMMMEFDGLLLDYSRQRATVETMDKLLNLAKASQLTEKISRMFNGEHINSTENRSVLHVALRAPKDAVIKADGMNVVPEVWNVLDKIKEFSDKIRSGSWVGATGKPLKDVIAIGIGGSFLGPLFVHTALQTDPEALESAKGRQLRFLANIDPVDVARNISGLNPETTLVVVVSKTFTTAETMLNARTLREWITAALGASAVAKHMVAVSTNLALVEKFGIDPNNAFAFWDWVGGRYSVCSAVGVLPLSLQYGFSMVEKFLKGASSIDQHFQSTPFEKNIPVLLGLLSVWNVSFLGYPARAILPYSQALEKFAPHIQQVSMESNGKGVSIDGLPLPFETGEIDFGEPGTNGQHSFYQLIHQGRVIPCDFIGIVKSQQPVYLKGEVVSNHDELMSNFFAQPDALAYGKTPEQLQKENVSENLIPHKTFSGNRPSLSLLLPELTAYNVGQLLAIYEHRVAVQGFVWGINSFDQWGVELGKVLATQVRKQLHSSRTQGTAPEGFNYSTTTLLKRYLETSSEPQM.

At A2 the chain carries N-acetylalanine. The active-site Proton donor is the E361. Residues H392 and K517 contribute to the active site.

It belongs to the GPI family. As to quaternary structure, homodimer.

It is found in the cytoplasm. The enzyme catalyses alpha-D-glucose 6-phosphate = beta-D-fructose 6-phosphate. The protein operates within carbohydrate degradation; glycolysis; D-glyceraldehyde 3-phosphate and glycerone phosphate from D-glucose: step 2/4. Inhibited by glycerol-3-P (G3P). The protein is Glucose-6-phosphate isomerase, cytosolic (PGIC) of Arabidopsis thaliana (Mouse-ear cress).